A 107-amino-acid chain; its full sequence is Insulin-like peptide 6 (107 aa).

Positions 1 to 33 (MVLKVPTSKVLLVLATLFAVAAMISSWMPQVAA) are cleaved as a signal peptide. 3 disulfides stabilise this stretch: Cys48/Cys91, Cys60/Cys105, and Cys90/Cys96. Residues 67 to 76 (LGDVFPNSFG) constitute a propeptide, connecting peptide.

The protein belongs to the insulin family. In terms of assembly, heterodimer of a B chain and an A chain linked by two disulfide bonds. Expressed at a low level in the larval gut.

Its subcellular location is the secreted. Its function is as follows. Possible ligand of InR/insulin-like receptor. This Drosophila melanogaster (Fruit fly) protein is Insulin-like peptide 6.